The primary structure comprises 217 residues: GRB2-related adapter protein (217 aa).

One can recognise an SH3 1 domain in the interval 1-58 (MESVALYSFQATESDELAFNKGDTLKILNMEDDQNWYKAELRGAEGFVPKNYIRVKPH). In terms of domain architecture, SH2 spans 60–152 (WYSGRISRQL…RRQIFLCDEQ (93 aa)). Residues 158-217 (SRACFAQAQFDFSAQDPSQLSLRRGDIVEVVEREDPHWWRGRAGGRLGFFPRSYVQPVHL) enclose the SH3 2 domain.

The protein belongs to the GRB2/sem-5/DRK family. In terms of assembly, associates through its SH2 domain with ligand-activated receptors for stem cell factor (KIT) and erythropoietin (EPOR). Also forms a stable complex with the Bcr-Abl oncoprotein. GRAP is associated with the Ras guanine nucleotide exchange factor SOS1, primarily through its N-terminal SH3 domain. Interacts with phosphorylated LAT upon TCR activation. Interacts with SHB. As to expression, expressed in inner ear, in neruonal fibers innervating cochlear and utricular auditory hair cells (at protein level).

It localises to the membrane. The protein resides in the synapse. In terms of biological role, couples signals from receptor and cytoplasmic tyrosine kinases to the Ras signaling pathway. Plays a role in the inner ear and in hearing. This is GRB2-related adapter protein from Mus musculus (Mouse).